Here is a 201-residue protein sequence, read N- to C-terminus: 3-isopropylmalate dehydratase small subunit (201 aa).

It belongs to the LeuD family. LeuD type 1 subfamily. Heterodimer of LeuC and LeuD.

It carries out the reaction (2R,3S)-3-isopropylmalate = (2S)-2-isopropylmalate. It functions in the pathway amino-acid biosynthesis; L-leucine biosynthesis; L-leucine from 3-methyl-2-oxobutanoate: step 2/4. In terms of biological role, catalyzes the isomerization between 2-isopropylmalate and 3-isopropylmalate, via the formation of 2-isopropylmaleate. The protein is 3-isopropylmalate dehydratase small subunit of Salmonella arizonae (strain ATCC BAA-731 / CDC346-86 / RSK2980).